We begin with the raw amino-acid sequence, 106 residues long: UPF0473 protein LCABL_08490 (106 aa).

It belongs to the UPF0473 family.

The sequence is that of UPF0473 protein LCABL_08490 from Lacticaseibacillus casei (strain BL23) (Lactobacillus casei).